The primary structure comprises 1712 residues: MAGAWLRWGLLLWAGLLAWSAHGRVRRITYVVRPGPGLPAGTLPLAGPPRTFNVALDARYSRSSTATSSRSLAGPPAERTRRTSQPGGAALPGLRSPLPPEPARPGAPSRQLHSKAGAQTAVTRFAKHGRQVVRSKVQQDTQSSGGSRLQVQQKQQLQGINVCGGQCCHGWSKAPGSQRCTKPSCVPPCQNGGMCLRPQFCVCKPGTKGKACEITAAQDTMSPVFGGQNPGSSWVPPEPAAKRTSTKKADTLPRVSPVAQMTLTLKPKPSMGLSQQIHSQVAPLSSQNVMIRHGQTQEYVLKPKYFPAPKVVSGEQSTEGSFSLRYGQEQGTAPFQVSNHTGRIKVVFTPSICKVTCTKGNCHNSCQKGNTTTLISENGHAADTLTATNFRVVICHLPCMNGGQCSSRDKCQCPPNFTGKLCQIPVLGASMPKLYQHAQQPGKALGSHVIHSTHTLPLTMTNQQGVKVKFPPNIVNIHVKHPPEASVQIHQVSRIDGPVGQRVKEVQPGQSQVSYQGLPVQKTQTVHSTYSHQQVIPHVYPVAAKTQLGRCFQETIGSQCGKALPGLSKQEDCCGTVGTSWGFNKCQKCPKKQSYHGYTQMMECLQGYKRVNNTFCQDINECQLQGVCPNGECLNTMGSYRCSCKMGFGPDPTFSSCVPDPPMISEEKGPCYRLVSPGRQCMHPLSVHLTKQICCCSVGKAWGPQCEKCPLPGTAAFKEICPGGMGYTVSGIHRRRPIHQHIGKEAVFVKPKNTQPVAKSTHPPPLPAKEEPVEALTSSREHGPGVAEPEVVTAPPEKEIPSLDQEKTRLEPGQPQLSPGVSTIHLHPQFPVVVEKTSPPVPVEVAPEGSTSSASQVIAPTQVTEINECTVNPDICGAGHCINLPVRYTCICYEGYKFSEQQRKCIDIDECAQAQHLCSQGRCENTEGSFLCICPAGFIASEEGSNCIDVDECLRPDVCRDGRCINTAGAFRCEYCDSGYRMSRRGHCEDIDECLTPSTCPEEQCVNSPGSYQCVPCTEGFRGWNGQCLDVDECLQPKVCTNGSCTNLEGSYMCSCHKGYSPTPDHRHCQDIDECQQGNLCMNGQCKNTDGSFRCTCGQGYQLSAAKDQCEDIDECEHRHLCSHGQCRNTEGSFQCLCNQGYRASVLGDHCEDINECLEDSSVCQGGDCINTAGSYDCTCPDGLQLNDNKGCQDINECAQPGLCAPHGECLNTQGSFHCVCEQGFSISADGRTCEDIDECVNNTVCDSHGFCDNTAGSFRCLCYQGFQAPQDGQGCVDVNECELLSGVCGEAFCENVEGSFLCVCADENQEYSPMTGQCRSRATEDSGVDRQPKEEKKECYYNLNDASLCDNVLAPNVTKQECCCTSGAGWGDNCEIFPCPVQGTAEFSEMCPRGKGFVPAGESSYETGGENYKDADECLLFGEEICKNGYCLNTQPGYECYCKEGTYYDPVKLQCFDMDECQDPNSCIDGQCVNTEGSYNCFCTHPMVLDASEKRCVQPTESNEQIEETDVYQDLCWEHLSEEYVCSRPLVGKQTTYTECCCLYGEAWGMQCALCPMKDSDDYAQLCNIPVTGRRRPYGRDALVDFSEQYGPETDPYFIQDRFLNSFEELQAEECGILNGCENGRCVRVQEGYTCDCFDGYHLDMAKMTCVDVNECSELNNRMSLCKNAKCINTEGSYKCVCLPGYVPSDKPNYCTPLNTALNLDKDSDLE.

Positions methionine 1–serine 20 are cleaved as a signal peptide. The segment at serine 63–arginine 148 is disordered. A compositionally biased stretch (polar residues) spans lysine 136–serine 147. The region spanning threonine 181–glutamate 213 is the EGF-like 1 domain. Intrachain disulfides connect cysteine 185–cysteine 195, cysteine 189–cysteine 201, and cysteine 203–cysteine 212. Residues asparagine 339 and asparagine 370 are each glycosylated (N-linked (GlcNAc...) asparagine). One can recognise an EGF-like 2 domain in the interval arginine 391 to glutamine 423. 6 disulfide bridges follow: cysteine 395–cysteine 405, cysteine 399–cysteine 411, cysteine 413–cysteine 422, cysteine 551–cysteine 573, cysteine 560–cysteine 586, and cysteine 574–cysteine 589. A glycan (N-linked (GlcNAc...) asparagine) is linked at asparagine 416. The 53-residue stretch at glycine 549–methionine 601 folds into the TB 1 domain. An N-linked (GlcNAc...) asparagine glycan is attached at asparagine 612. One can recognise an EGF-like 3; calcium-binding domain in the interval aspartate 618 to valine 658. Cystine bridges form between cysteine 622/cysteine 633, cysteine 628/cysteine 642, cysteine 644/cysteine 657, cysteine 671/cysteine 694, cysteine 681/cysteine 706, cysteine 695/cysteine 709, and cysteine 696/cysteine 721. O-linked (Glc) serine glycosylation is present at serine 639. The 53-residue stretch at glycine 669–cysteine 721 folds into the TB 2 domain. A disordered region spans residues lysine 752 to leucine 803. O-linked (GalNAc...) threonine glycosylation is found at threonine 761 and threonine 793. In terms of domain architecture, EGF-like 4; calcium-binding spans glutamate 865 to isoleucine 906. 37 disulfide bridges follow: cysteine 869–cysteine 881, cysteine 876–cysteine 890, cysteine 892–cysteine 905, cysteine 911–cysteine 923, cysteine 918–cysteine 932, cysteine 934–cysteine 947, cysteine 953–cysteine 964, cysteine 959–cysteine 973, cysteine 976–cysteine 988, cysteine 994–cysteine 1005, cysteine 1000–cysteine 1014, cysteine 1017–cysteine 1028, cysteine 1034–cysteine 1045, cysteine 1040–cysteine 1054, cysteine 1056–cysteine 1069, cysteine 1075–cysteine 1086, cysteine 1081–cysteine 1095, cysteine 1097–cysteine 1110, cysteine 1116–cysteine 1127, cysteine 1122–cysteine 1136, cysteine 1138–cysteine 1151, cysteine 1157–cysteine 1169, cysteine 1164–cysteine 1178, cysteine 1180–cysteine 1192, cysteine 1198–cysteine 1210, cysteine 1204–cysteine 1219, cysteine 1221–cysteine 1234, cysteine 1240–cysteine 1252, cysteine 1246–cysteine 1261, cysteine 1263–cysteine 1276, cysteine 1282–cysteine 1294, cysteine 1289–cysteine 1303, cysteine 1305–cysteine 1319, cysteine 1340–cysteine 1363, cysteine 1350–cysteine 1375, cysteine 1364–cysteine 1380, and cysteine 1365–cysteine 1392. The region spanning aspartate 907–isoleucine 948 is the EGF-like 5; calcium-binding domain. The O-linked (Glc) serine glycan is linked to serine 929. Residues aspartate 949 to glutamate 989 enclose the EGF-like 6; calcium-binding domain. (3R)-3-hydroxyasparagine is present on asparagine 966. An EGF-like 7; calcium-binding domain is found at aspartate 990–leucine 1029. A glycan (O-linked (Glc) serine) is linked at serine 1011. Positions aspartate 1030 to glutamine 1070 constitute an EGF-like 8; calcium-binding domain. Asparagine 1042 carries an N-linked (GlcNAc...) asparagine glycan. A glycan (O-linked (Glc) serine) is linked at serine 1051. The EGF-like 9; calcium-binding domain maps to aspartate 1071–glutamate 1111. In terms of domain architecture, EGF-like 10; calcium-binding spans aspartate 1112–glutamate 1152. (3R)-3-hydroxyasparagine is present on asparagine 1129. A glycan (O-linked (Glc) serine) is linked at serine 1133. In terms of domain architecture, EGF-like 11; calcium-binding spans aspartate 1153–glutamine 1193. Residues aspartate 1194 to glutamate 1235 form the EGF-like 12; calcium-binding domain. An O-linked (Glc) serine glycan is attached at serine 1216. The region spanning aspartate 1236–valine 1277 is the EGF-like 13; calcium-binding domain. Residue asparagine 1242 is glycosylated (N-linked (GlcNAc...) asparagine). An EGF-like 14; calcium-binding domain is found at aspartate 1278 to arginine 1320. An 8-Cys3 region region spans residues glutamate 1335–glycine 1402. The 55-residue stretch at lysine 1338–cysteine 1392 folds into the TB 3 domain. An N-linked (GlcNAc...) asparagine glycan is attached at asparagine 1357. Serine 1405 carries the phosphoserine modification. In terms of domain architecture, EGF-like 15; calcium-binding spans aspartate 1415–phenylalanine 1457. Intrachain disulfides connect cysteine 1419–cysteine 1432, cysteine 1427–cysteine 1441, cysteine 1443–cysteine 1456, cysteine 1462–cysteine 1473, cysteine 1468–cysteine 1482, cysteine 1484–cysteine 1497, cysteine 1517–cysteine 1541, cysteine 1527–cysteine 1553, cysteine 1542–cysteine 1556, and cysteine 1543–cysteine 1568. Residues aspartate 1458–valine 1498 form the EGF-like 16; calcium-binding domain. O-linked (Glc) serine glycosylation is present at serine 1479. Positions valine 1498–glutamate 1712 are C-terminal domain. The TB 4 domain occupies aspartate 1515–cysteine 1568. Phosphoserine is present on residues serine 1588 and serine 1607. In terms of domain architecture, EGF-like 17 spans glutamine 1612 to valine 1652. Intrachain disulfides connect cysteine 1616–cysteine 1627, cysteine 1622–cysteine 1636, cysteine 1638–cysteine 1651, cysteine 1657–cysteine 1672, cysteine 1667–cysteine 1681, and cysteine 1683–cysteine 1696. An EGF-like 18; calcium-binding domain is found at aspartate 1653–threonine 1697. An O-linked (Glc) serine glycan is attached at serine 1678.

It belongs to the LTBP family. Interacts with TGFB1; associates via disulfide bonds with the Latency-associated peptide chain (LAP) regulatory chain of TGFB1, leading to regulate activation of TGF-beta-1. LTBP1 does not bind directly to TGF-beta-1, the active chain of TGFB1. Interacts (via C-terminal domain) with FBN1 (via N-terminal domain). Interacts with FBN2. Interacts with ADAMTSL2. Interacts with EFEMP2. Contains hydroxylated asparagine residues. Post-translationally, two intrachain disulfide bonds from the TB3 domain are rearranged upon TGFB1 binding, and form interchain bonds with TGFB1 propeptide, anchoring it to the extracellular matrix. In terms of processing, O-glycosylated on serine residues by POGLUT2 and POGLUT3.

It localises to the secreted. The protein localises to the extracellular space. It is found in the extracellular matrix. Key regulator of transforming growth factor beta (TGFB1, TGFB2 and TGFB3) that controls TGF-beta activation by maintaining it in a latent state during storage in extracellular space. Associates specifically via disulfide bonds with the Latency-associated peptide (LAP), which is the regulatory chain of TGF-beta, and regulates integrin-dependent activation of TGF-beta. Outcompeted by LRRC32/GARP for binding to LAP regulatory chain of TGF-beta. This is Latent-transforming growth factor beta-binding protein 1 (Ltbp1) from Rattus norvegicus (Rat).